The following is a 417-amino-acid chain: MAEIRNYTINFGPQHPSAHGVLRLVLELDGEVVERADPHIGLLHRGTEKLAETRTWVQSVPYMDRLDYVSMMCNEHAYCMAIERLLGVEVPLRAQYIRVMFDEITRILNHLLNIGTHALDIGAMTMVLYTFREREDLMDAYEAVSGARMHAAYYRPGGVYRDLPDRMPQYQPNKFKNANVVKDLNAARQGSLLDFLDDFTQRFPRYCDEYETLLTDNRIWKQRTVGIGVVTPEQALAWGFSGPMIRGSGIAWDLRKKQPYEVYDKVDFDIPVGKNGDCYDRYLCRMEEMRQSNRIIRQCIDWLRKNPGPVITDNHKVAPPSREQMKSNMEELIHHFKLFTEGMHVPKGEAYAAVEHPKGEFGVYAVSDGANKPYRLKLRAPGFAHLAAMDEISRGHMIADVVAIIGTMDVVFGEIDR.

It belongs to the complex I 49 kDa subunit family. NDH-1 is composed of 14 different subunits. Subunits NuoB, C, D, E, F, and G constitute the peripheral sector of the complex.

The protein resides in the cell inner membrane. The enzyme catalyses a quinone + NADH + 5 H(+)(in) = a quinol + NAD(+) + 4 H(+)(out). Its function is as follows. NDH-1 shuttles electrons from NADH, via FMN and iron-sulfur (Fe-S) centers, to quinones in the respiratory chain. The immediate electron acceptor for the enzyme in this species is believed to be ubiquinone. Couples the redox reaction to proton translocation (for every two electrons transferred, four hydrogen ions are translocated across the cytoplasmic membrane), and thus conserves the redox energy in a proton gradient. This chain is NADH-quinone oxidoreductase subunit D, found in Azoarcus sp. (strain BH72).